The primary structure comprises 442 residues: Putative nucleotide-sugar transporter YMD8 (442 aa).

Topologically, residues 1–3 are cytoplasmic; the sequence is MNR. A helical transmembrane segment spans residues 4-24; the sequence is TVFLAFVFGWYFCSIALSIYN. Residues 25–32 lie on the Extracellular side of the membrane; it reads RWMFDPKD. A helical membrane pass occupies residues 33–53; the sequence is GLGIGYPVLVTTFHQATLWLL. Over 54–76 the chain is Cytoplasmic; sequence SGIYIKLRHKPVKNVLRKNNGFN. The helical transmembrane segment at 77–97 threads the bilayer; the sequence is WSFFLKFLLPTAVASAGDIGL. Over 98–107 the chain is Extracellular; the sequence is SNVSFQYVPL. Asn99 carries N-linked (GlcNAc...) asparagine glycosylation. The helical transmembrane segment at 108–128 threads the bilayer; that stretch reads TIYTIIKSSSIAFVLLFGCIF. Residues 129 to 132 are Cytoplasmic-facing; sequence KLEK. Residues 133–153 form a helical membrane-spanning segment; the sequence is FHWKLALSVIIMFVGVALMVF. At 154-166 the chain is on the extracellular side; the sequence is KPSDSTSTKNDQA. A helical membrane pass occupies residues 167–187; sequence LVIFGSFLVLASSCLSGLRWV. Residues 188–254 lie on the Cytoplasmic side of the membrane; that stretch reads YTQLMLRNNP…PIHTIHQLAP (67 aa). Phosphoserine is present on Ser209. A helical transmembrane segment spans residues 255-275; it reads IMGITLLLTSLLVEKPFPGIF. Residues 276–301 lie on the Extracellular side of the membrane; that stretch reads SSSIFRLDTSNGGVGTETTVLSIVRG. The helical transmembrane segment at 302 to 322 threads the bilayer; it reads IVLLILPGFAVFLLTICEFSI. The Cytoplasmic segment spans residues 323 to 329; sequence LEQTPVL. A helical membrane pass occupies residues 330–350; that stretch reads TVSIVGIVKELLTVIFGIIIL. Residues 351-355 lie on the Extracellular side of the membrane; it reads SERLS. A helical transmembrane segment spans residues 356-376; sequence GFYNWLGMLIIMADVCYYNYF. Residues 377–442 lie on the Cytoplasmic side of the membrane; that stretch reads RYKQDLLQKY…QNVSRSSQQV (66 aa).

Belongs to the TPT transporter family. SLC35C subfamily.

Its subcellular location is the golgi apparatus membrane. The protein localises to the cytoplasmic vesicle. It is found in the COPI-coated vesicle membrane. The polypeptide is Putative nucleotide-sugar transporter YMD8 (YMD8) (Saccharomyces cerevisiae (strain ATCC 204508 / S288c) (Baker's yeast)).